The chain runs to 239 residues: O-methyltransferase ankF (239 aa).

S-adenosyl-L-methionine-binding positions include E71, 73–74 (GT), S79, E98, and A127.

The protein belongs to the class I-like SAM-binding methyltransferase superfamily. Cation-dependent O-methyltransferase family.

It catalyses the reaction NK13650 B + S-adenosyl-L-methionine = NK13650 D + S-adenosyl-L-homocysteine + H(+). It participates in secondary metabolite biosynthesis. Its function is as follows. O-methyltransferase; part of the ank cluster that mediates the biosynthesis of NK13650 C, a highly modified cyclo-arginine-tyrosine dipeptide. AnkF converts NK13650 B to produce NK13650 D via methylation of the C-17 phenol group. Within the pathway, the cyclodipeptide synthase ankA acts as the scaffold-generating enzyme and is responsible for formation of the cyclo-Arg-Tyr diketopiperazine (cRY) from L-Arg and L-Tyr. The ankA product cRY is desaturated by the cytochrome P450 monooxygenase ankB to yield a dehydro-cyclodipeptide intermediate. The FAD-dependent monooxygenase ankC then installs the m-OH, ankD catalyzes the attachment of L-homoserine, and ankE ligates citrate to the ankD product to yield NK13650 B. The O-methyltransferase ankF is responsible for methylation of the C-17 phenol group of NK13650 B to produce NK13650 D. Amidation of NK13650 D with L-Asp by ankG then leads to the production of NK13650 C, whereas amidation of NK13650 B produces NK13650 A. This Aspergillus thermomutatus (Neosartorya pseudofischeri) protein is O-methyltransferase ankF.